A 362-amino-acid chain; its full sequence is Probable dual-specificity RNA methyltransferase RlmN (362 aa).

Glu105 (proton acceptor) is an active-site residue. A Radical SAM core domain is found at 111-344 (HEYGNSICVT…VTIRREQGHD (234 aa)). A disulfide bond links Cys118 and Cys349. [4Fe-4S] cluster is bound by residues Cys125, Cys129, and Cys132. S-adenosyl-L-methionine is bound by residues 175–176 (GE), Ser207, 230–232 (SLH), and Asn306. Cys349 acts as the S-methylcysteine intermediate in catalysis.

It belongs to the radical SAM superfamily. RlmN family. It depends on [4Fe-4S] cluster as a cofactor.

Its subcellular location is the cytoplasm. The catalysed reaction is adenosine(2503) in 23S rRNA + 2 reduced [2Fe-2S]-[ferredoxin] + 2 S-adenosyl-L-methionine = 2-methyladenosine(2503) in 23S rRNA + 5'-deoxyadenosine + L-methionine + 2 oxidized [2Fe-2S]-[ferredoxin] + S-adenosyl-L-homocysteine. It carries out the reaction adenosine(37) in tRNA + 2 reduced [2Fe-2S]-[ferredoxin] + 2 S-adenosyl-L-methionine = 2-methyladenosine(37) in tRNA + 5'-deoxyadenosine + L-methionine + 2 oxidized [2Fe-2S]-[ferredoxin] + S-adenosyl-L-homocysteine. Specifically methylates position 2 of adenine 2503 in 23S rRNA and position 2 of adenine 37 in tRNAs. This is Probable dual-specificity RNA methyltransferase RlmN from Bacillus cytotoxicus (strain DSM 22905 / CIP 110041 / 391-98 / NVH 391-98).